Consider the following 264-residue polypeptide: ATP synthase subunit a (264 aa).

7 helical membrane passes run 29–49 (TWHI…LWIF), 90–110 (IAPL…MDMI), 111–131 (PVDW…KVVP), 134–154 (DVNI…YYSI), 177–197 (IPVN…SLAL), 208–228 (LIFI…TLGV), and 235–255 (LIFH…LTIV).

Belongs to the ATPase A chain family. In terms of assembly, F-type ATPases have 2 components, CF(1) - the catalytic core - and CF(0) - the membrane proton channel. CF(1) has five subunits: alpha(3), beta(3), gamma(1), delta(1), epsilon(1). CF(0) has three main subunits: a(1), b(2) and c(9-12). The alpha and beta chains form an alternating ring which encloses part of the gamma chain. CF(1) is attached to CF(0) by a central stalk formed by the gamma and epsilon chains, while a peripheral stalk is formed by the delta and b chains.

Its subcellular location is the cell inner membrane. Functionally, key component of the proton channel; it plays a direct role in the translocation of protons across the membrane. This is ATP synthase subunit a from Shewanella denitrificans (strain OS217 / ATCC BAA-1090 / DSM 15013).